The chain runs to 479 residues: Serine--tRNA ligase, mitochondrial (479 aa).

A mitochondrion-targeting transit peptide spans 1 to 42; that stretch reads MRLTNRRFSTFLGNALPSKKKGFIFMSQLLYLRTFSTHTSYL. L-serine is bound at residue 287-289; sequence TAE. 317–319 contributes to the ATP binding site; the sequence is RRE. Residue glutamate 340 coordinates L-serine. 404-407 serves as a coordination point for ATP; it reads EITS. Threonine 438 contacts L-serine.

The protein belongs to the class-II aminoacyl-tRNA synthetase family. Type-1 seryl-tRNA synthetase subfamily. As to quaternary structure, homodimer. The tRNA molecule probably binds across the dimer.

The protein resides in the mitochondrion matrix. The catalysed reaction is tRNA(Ser) + L-serine + ATP = L-seryl-tRNA(Ser) + AMP + diphosphate + H(+). Functionally, catalyzes the attachment of serine to tRNA(Ser). Is also probably able to aminoacylate tRNA(Sec) with serine, to form the misacylated tRNA L-seryl-tRNA(Sec), which will be further converted into selenocysteinyl-tRNA(Sec). This is Serine--tRNA ligase, mitochondrial (dia4) from Schizosaccharomyces pombe (strain 972 / ATCC 24843) (Fission yeast).